The primary structure comprises 88 residues: Antitoxin VapB3 (88 aa).

Its function is as follows. Antitoxin component of a type II toxin-antitoxin (TA) system. This Mycobacterium tuberculosis (strain CDC 1551 / Oshkosh) protein is Antitoxin VapB3 (vapB3).